We begin with the raw amino-acid sequence, 378 residues long: Chaperone protein DnaJ (378 aa).

The J domain maps to 6–70 (DYYDVLGVSR…QKRQQYDQFG (65 aa)). The segment at 137-219 (GKTSEISYSR…CHGKGVKTQK (83 aa)) adopts a CR-type zinc-finger fold. The Zn(2+) site is built by cysteine 150, cysteine 153, cysteine 167, cysteine 170, cysteine 193, cysteine 196, cysteine 207, and cysteine 210. CXXCXGXG motif repeat units lie at residues 150–157 (CEVCKGSG), 167–174 (CDKCGGSG), 193–200 (CDKCTGSG), and 207–214 (CHNCHGKG).

This sequence belongs to the DnaJ family. As to quaternary structure, homodimer. Zn(2+) serves as cofactor.

It is found in the cytoplasm. Its function is as follows. Participates actively in the response to hyperosmotic and heat shock by preventing the aggregation of stress-denatured proteins and by disaggregating proteins, also in an autonomous, DnaK-independent fashion. Unfolded proteins bind initially to DnaJ; upon interaction with the DnaJ-bound protein, DnaK hydrolyzes its bound ATP, resulting in the formation of a stable complex. GrpE releases ADP from DnaK; ATP binding to DnaK triggers the release of the substrate protein, thus completing the reaction cycle. Several rounds of ATP-dependent interactions between DnaJ, DnaK and GrpE are required for fully efficient folding. Also involved, together with DnaK and GrpE, in the DNA replication of plasmids through activation of initiation proteins. This Lactobacillus delbrueckii subsp. bulgaricus (strain ATCC 11842 / DSM 20081 / BCRC 10696 / JCM 1002 / NBRC 13953 / NCIMB 11778 / NCTC 12712 / WDCM 00102 / Lb 14) protein is Chaperone protein DnaJ.